The primary structure comprises 447 residues: N-succinylarginine dihydrolase (447 aa).

Substrate-binding positions include 21–30 (AGLAHGNVAS), Asn-112, and 139–140 (HR). Glu-176 is a catalytic residue. Arg-215 serves as a coordination point for substrate. The active site involves His-251. Substrate is bound by residues Asp-253 and Asn-364. The active-site Nucleophile is Cys-370.

It belongs to the succinylarginine dihydrolase family. Homodimer.

It carries out the reaction N(2)-succinyl-L-arginine + 2 H2O + 2 H(+) = N(2)-succinyl-L-ornithine + 2 NH4(+) + CO2. The protein operates within amino-acid degradation; L-arginine degradation via AST pathway; L-glutamate and succinate from L-arginine: step 2/5. Its function is as follows. Catalyzes the hydrolysis of N(2)-succinylarginine into N(2)-succinylornithine, ammonia and CO(2). This Chromohalobacter salexigens (strain ATCC BAA-138 / DSM 3043 / CIP 106854 / NCIMB 13768 / 1H11) protein is N-succinylarginine dihydrolase.